The primary structure comprises 710 residues: Pentatricopeptide repeat-containing protein At3g14330 (710 aa).

10 PPR repeats span residues N166–S196, T200–P234, G235–V269, D270–T304, W305–E331, S336–P370, D371–K401, D402–P436, D437–E467, and A473–K503. Residues I508 to K583 are type E motif. The interval D584–E615 is type E(+) motif. A type DYW motif region spans residues K616 to W710.

The protein belongs to the PPR family. PCMP-H subfamily.

The sequence is that of Pentatricopeptide repeat-containing protein At3g14330 (PCMP-H57) from Arabidopsis thaliana (Mouse-ear cress).